A 127-amino-acid polypeptide reads, in one-letter code: DLECPSGWSSYDRYCYKPFKQEMTWADAERFCSEQAKGRHLLSVETALEASFVDNVLYANKEYLTRYIWIGLRVQNKGQPCSSIYSENLVDPFDCFMVSRDTRLREWFKVDCEQQHSFICKFTRPRR.

3 disulfide bridges follow: C4–C15, C32–C120, and C95–C112. Residues 11-121 (YDRYCYKPFK…CEQQHSFICK (111 aa)) form the C-type lectin domain.

Belongs to the snaclec family. Heterodimer of subunits alpha and beta; disulfide-linked. Expressed by the venom gland.

Its subcellular location is the secreted. In terms of biological role, binds to the subunit GPIbalpha (GP1BA) of the platelet GPIb/V/IX receptor system. It inhibits ristocetin- and vWF-induced platelet aggregation in platelet-rich plasma by inhibiting the binding of vWF to GPIbalpha. This is Snaclec CHH-B subunit alpha from Crotalus horridus (Timber rattlesnake).